A 180-amino-acid chain; its full sequence is NAD(P)H-quinone oxidoreductase subunit J (180 aa).

A compositionally biased stretch (polar residues) spans 1-16; the sequence is MNEETQTSELTNTDQG. Positions 1–23 are disordered; the sequence is MNEETQTSELTNTDQGPQIEPGP.

This sequence belongs to the complex I 30 kDa subunit family. NDH-1 can be composed of about 15 different subunits; different subcomplexes with different compositions have been identified which probably have different functions.

The protein localises to the cellular thylakoid membrane. The enzyme catalyses a plastoquinone + NADH + (n+1) H(+)(in) = a plastoquinol + NAD(+) + n H(+)(out). The catalysed reaction is a plastoquinone + NADPH + (n+1) H(+)(in) = a plastoquinol + NADP(+) + n H(+)(out). Its function is as follows. NDH-1 shuttles electrons from an unknown electron donor, via FMN and iron-sulfur (Fe-S) centers, to quinones in the respiratory and/or the photosynthetic chain. The immediate electron acceptor for the enzyme in this species is believed to be plastoquinone. Couples the redox reaction to proton translocation, and thus conserves the redox energy in a proton gradient. Cyanobacterial NDH-1 also plays a role in inorganic carbon-concentration. The chain is NAD(P)H-quinone oxidoreductase subunit J from Prochlorococcus marinus (strain MIT 9211).